The sequence spans 280 residues: Bicarbonate transport system permease protein CmpB (280 aa).

7 helical membrane-spanning segments follow: residues 32–52, 99–119, 126–146, 153–173, 198–218, 219–239, and 251–271; these read PIFG…AGLI, YSLA…QPLL, IFQF…LVAL, AIFV…TEGV, ILIP…IGLA, WLAI…GFFI, and IILA…GIAY. The region spanning 88–266 is the ABC transmembrane type-1 domain; it reads TLASLGRVAQ…YIGAVGLLLD (179 aa).

The protein belongs to the binding-protein-dependent transport system permease family. As to quaternary structure, the complex is composed of two ATP-binding proteins (CmpC and CmpD), a transmembrane protein (CmpB) and a solute-binding protein (CmpA).

The protein resides in the cell inner membrane. Functionally, part of the ABC transporter complex CmpABCD involved in bicarbonate transport. Probably responsible for the translocation of the substrate across the membrane. The polypeptide is Bicarbonate transport system permease protein CmpB (cmpB) (Synechocystis sp. (strain ATCC 27184 / PCC 6803 / Kazusa)).